Here is a 421-residue protein sequence, read N- to C-terminus: ATP-dependent RNA helicase RhlB (421 aa).

The Q motif motif lies at 9–37 (QKFSDFALHPKVVEALEKKGFHNCTPIQA). The Helicase ATP-binding domain maps to 40–219 (LPLTLAGRDV…FEQMNNAEYI (180 aa)). 53–60 (AQTGTGKT) serves as a coordination point for ATP. The DEAD box motif lies at 165-168 (DEAD). The Helicase C-terminal domain maps to 245 to 390 (RLLQTLIEEE…VSKYNPDALM (146 aa)). The tract at residues 392–421 (DLPKPLRLTRPRTGNGPRRTGAPRNRRRSG) is disordered. Over residues 402-414 (PRTGNGPRRTGAP) the composition is skewed to low complexity.

This sequence belongs to the DEAD box helicase family. RhlB subfamily. As to quaternary structure, component of the RNA degradosome, which is a multiprotein complex involved in RNA processing and mRNA degradation.

The protein localises to the cytoplasm. The enzyme catalyses ATP + H2O = ADP + phosphate + H(+). In terms of biological role, DEAD-box RNA helicase involved in RNA degradation. Has RNA-dependent ATPase activity and unwinds double-stranded RNA. The sequence is that of ATP-dependent RNA helicase RhlB from Escherichia coli (strain SMS-3-5 / SECEC).